The chain runs to 379 residues: 3-dehydroquinate synthase (379 aa).

NAD(+) contacts are provided by residues 113–117, 137–138, Lys-150, and Lys-159; these read GVIGD and TS. Positions 192, 256, and 274 each coordinate Zn(2+).

The protein belongs to the sugar phosphate cyclases superfamily. Dehydroquinate synthase family. Co(2+) is required as a cofactor. The cofactor is Zn(2+). It depends on NAD(+) as a cofactor.

The protein localises to the cytoplasm. The enzyme catalyses 7-phospho-2-dehydro-3-deoxy-D-arabino-heptonate = 3-dehydroquinate + phosphate. Its pathway is metabolic intermediate biosynthesis; chorismate biosynthesis; chorismate from D-erythrose 4-phosphate and phosphoenolpyruvate: step 2/7. Its function is as follows. Catalyzes the conversion of 3-deoxy-D-arabino-heptulosonate 7-phosphate (DAHP) to dehydroquinate (DHQ). This Zymomonas mobilis subsp. mobilis (strain ATCC 31821 / ZM4 / CP4) protein is 3-dehydroquinate synthase.